Reading from the N-terminus, the 286-residue chain is Acetylglutamate kinase (286 aa).

Residues 63-64, Arg85, and Asn178 contribute to the substrate site; that span reads GG.

The protein belongs to the acetylglutamate kinase family. ArgB subfamily.

It localises to the cytoplasm. The enzyme catalyses N-acetyl-L-glutamate + ATP = N-acetyl-L-glutamyl 5-phosphate + ADP. It participates in amino-acid biosynthesis; L-arginine biosynthesis; N(2)-acetyl-L-ornithine from L-glutamate: step 2/4. Functionally, catalyzes the ATP-dependent phosphorylation of N-acetyl-L-glutamate. This chain is Acetylglutamate kinase, found in Clostridioides difficile (strain 630) (Peptoclostridium difficile).